Here is a 360-residue protein sequence, read N- to C-terminus: Phosphate acyltransferase (360 aa).

It belongs to the PlsX family. As to quaternary structure, homodimer. Probably interacts with PlsY.

It localises to the cytoplasm. It carries out the reaction a fatty acyl-[ACP] + phosphate = an acyl phosphate + holo-[ACP]. Its pathway is lipid metabolism; phospholipid metabolism. Functionally, catalyzes the reversible formation of acyl-phosphate (acyl-PO(4)) from acyl-[acyl-carrier-protein] (acyl-ACP). This enzyme utilizes acyl-ACP as fatty acyl donor, but not acyl-CoA. This chain is Phosphate acyltransferase, found in Janthinobacterium sp. (strain Marseille) (Minibacterium massiliensis).